Consider the following 70-residue polypeptide: MILKKEKKRIYILNNNIKNLNLKENVDVLNKRHKKNIIFQTDIYICSTYKGNKNIKKKSRTIIFIIKVNV.

This Plasmodium falciparum (isolate Palo Alto / Uganda) protein is PPF2L antigen.